The following is a 285-amino-acid chain: Ribonuclease H1 (285 aa).

The tract at residues 72-126 is disordered; sequence RSSSSPDGSKGQESAHEQKSQAKTSKRPREPLGEGEELPEPGPKHTRQDTEPAAV. The 147-residue stretch at 135 to 281 folds into the RNase H type-1 domain; sequence MGESVIVYTD…ADRLAREGAK (147 aa). Mg(2+) contacts are provided by aspartate 144, glutamate 185, aspartate 209, and aspartate 273.

Belongs to the RNase H family. As to quaternary structure, monomer. Mg(2+) is required as a cofactor.

The protein resides in the cytoplasm. The catalysed reaction is Endonucleolytic cleavage to 5'-phosphomonoester.. In the presence of magnesium, manganese is inhibitory. Its function is as follows. Endonuclease that specifically degrades the RNA of RNA-DNA hybrids. Plays a role in RNA polymerase II (RNAp II) transcription termination by degrading R-loop RNA-DNA hybrid formation at G-rich pause sites located downstream of the poly(A) site and behind the elongating RNAp II. This chain is Ribonuclease H1 (Rnaseh1), found in Mus musculus (Mouse).